Consider the following 740-residue polypeptide: ATP-dependent zinc metalloprotease YME1L (740 aa).

The Mitochondrial matrix portion of the chain corresponds to Met-1 to Lys-256. Residues Thr-257–Thr-277 form a helical membrane-spanning segment. Topologically, residues Ser-278 to Thr-740 are mitochondrial intermembrane. Gly-347–Thr-351 contributes to the ATP binding site. His-563 is a binding site for Zn(2+). Residue Glu-564 is part of the active site. Positions 567 and 641 each coordinate Zn(2+).

It in the N-terminal section; belongs to the AAA ATPase family. In the C-terminal section; belongs to the peptidase M41 family. The cofactor is Zn(2+).

It is found in the mitochondrion inner membrane. Functionally, ATP-dependent metalloprotease that catalyzes the degradation of folded and unfolded proteins with a suitable degron sequence in the mitochondrial intermembrane region. Plays an important role in regulating mitochondrial morphology and function by cleaving Opa1, giving rise to a form of Opa1 that promotes maintenance of normal mitochondrial structure and mitochondrial protein metabolism. Ensures cell proliferation, maintains normal cristae morphology and complex I respiration activity, promotes antiapoptotic activity and protects mitochondria from the accumulation of oxidatively damaged membrane proteins. Required to control the accumulation of nonassembled respiratory chain subunits such as ND-30. This chain is ATP-dependent zinc metalloprotease YME1L, found in Drosophila melanogaster (Fruit fly).